A 267-amino-acid polypeptide reads, in one-letter code: Pyrroline-5-carboxylate reductase (267 aa).

This sequence belongs to the pyrroline-5-carboxylate reductase family.

It is found in the cytoplasm. It carries out the reaction L-proline + NADP(+) = (S)-1-pyrroline-5-carboxylate + NADPH + 2 H(+). The catalysed reaction is L-proline + NAD(+) = (S)-1-pyrroline-5-carboxylate + NADH + 2 H(+). The protein operates within amino-acid biosynthesis; L-proline biosynthesis; L-proline from L-glutamate 5-semialdehyde: step 1/1. In terms of biological role, catalyzes the reduction of 1-pyrroline-5-carboxylate (PCA) to L-proline. The chain is Pyrroline-5-carboxylate reductase from Synechocystis sp. (strain ATCC 27184 / PCC 6803 / Kazusa).